The primary structure comprises 225 residues: Viral late gene transcription factor 3 (225 aa).

A zinc finger spans residues 7–27 (CSNCKHNGLITESNHEFCIFC).

The protein belongs to the nucleo-cytoplasmic large DNA viruses (NCLDVs) VLTF-3 family. In terms of assembly, interacts with the late transcription elongation factor H5/VLTF-4. Interacts with the late transcription factors VLTF-1.

Functionally, acts with RNA polymerase to initiate transcription from late gene promoters. The sequence is that of Viral late gene transcription factor 3 (VLTF3) from Fowlpox virus (strain NVSL) (FPV).